A 363-amino-acid chain; its full sequence is DNA replication and repair protein RecF (363 aa).

Residue 30–37 (GDNAQGKT) participates in ATP binding.

The protein belongs to the RecF family.

Its subcellular location is the cytoplasm. Its function is as follows. The RecF protein is involved in DNA metabolism; it is required for DNA replication and normal SOS inducibility. RecF binds preferentially to single-stranded, linear DNA. It also seems to bind ATP. This chain is DNA replication and repair protein RecF, found in Lachnospira eligens (strain ATCC 27750 / DSM 3376 / VPI C15-48 / C15-B4) (Eubacterium eligens).